A 118-amino-acid polypeptide reads, in one-letter code: MRAKDLLGRRGEELAAGYLESQGMRIVDRNWRCSEGEIDIVALDGDSLVIAEVKTRKSLAYGHPFEAVGVAKLARLHRLASAWCRDHELRMPCRRVDVVAVLDDGAGQPRVEHLRGVG.

It belongs to the UPF0102 family.

This Arthrobacter sp. (strain FB24) protein is UPF0102 protein Arth_2474.